The sequence spans 202 residues: Securin (202 aa).

The disordered stretch occupies residues 1–92 (MATLIYVDKE…QKQPSFSAKK (92 aa)). Ala-2 carries the post-translational modification N-acetylalanine. Positions 61 to 64 (RKAL) match the D-box motif. 2 consecutive short sequence motifs (TEK-box) follow at residues 71 to 73 (TEK) and 94 to 96 (TEK). Positions 163–173 (XPSPVKMPSPP) match the SH3-binding motif. Position 165 is a phosphoserine; by CDK1 (Ser-165).

This sequence belongs to the securin family. As to quaternary structure, interacts with RPS10 and DNAJA1. Interacts with the caspase-like ESPL1, and prevents its protease activity probably by covering its active site. Interacts with TP53 and blocks its activity probably by blocking its binding to DNA. Interacts with the Ku 70 kDa subunit of ds-DNA kinase. Interacts with PTTG1IP. Phosphorylated at Ser-165 by CDK1 during mitosis. In terms of processing, phosphorylated in vitro by ds-DNA kinase. Post-translationally, ubiquitinated through 'Lys-11' linkage of ubiquitin moieties by the anaphase promoting complex (APC) at the onset of anaphase, conducting to its degradation. 'Lys-11'-linked ubiquitination is mediated by the E2 ligase UBE2C/UBCH10.

The protein localises to the cytoplasm. Its subcellular location is the nucleus. Regulatory protein, which plays a central role in chromosome stability, in the p53/TP53 pathway, and DNA repair. Probably acts by blocking the action of key proteins. During the mitosis, it blocks Separase/ESPL1 function, preventing the proteolysis of the cohesin complex and the subsequent segregation of the chromosomes. At the onset of anaphase, it is ubiquitinated, conducting to its destruction and to the liberation of ESPL1. Its function is however not limited to a blocking activity, since it is required to activate ESPL1. Negatively regulates the transcriptional activity and related apoptosis activity of TP53. The negative regulation of TP53 may explain the strong transforming capability of the protein when it is overexpressed. May also play a role in DNA repair via its interaction with Ku, possibly by connecting DNA damage-response pathways with sister chromatid separation. This is Securin (PTTG1) from Pan troglodytes (Chimpanzee).